The chain runs to 363 residues: Histidinol-phosphate aminotransferase (363 aa).

Lys215 bears the N6-(pyridoxal phosphate)lysine mark.

Belongs to the class-II pyridoxal-phosphate-dependent aminotransferase family. Histidinol-phosphate aminotransferase subfamily. Homodimer. It depends on pyridoxal 5'-phosphate as a cofactor.

It catalyses the reaction L-histidinol phosphate + 2-oxoglutarate = 3-(imidazol-4-yl)-2-oxopropyl phosphate + L-glutamate. The protein operates within amino-acid biosynthesis; L-histidine biosynthesis; L-histidine from 5-phospho-alpha-D-ribose 1-diphosphate: step 7/9. The sequence is that of Histidinol-phosphate aminotransferase from Buchnera aphidicola subsp. Diuraphis noxia.